Here is a 92-residue protein sequence, read N- to C-terminus: Small ribosomal subunit protein uS19 (92 aa).

The protein belongs to the universal ribosomal protein uS19 family.

Its function is as follows. Protein S19 forms a complex with S13 that binds strongly to the 16S ribosomal RNA. This Bartonella quintana (strain Toulouse) (Rochalimaea quintana) protein is Small ribosomal subunit protein uS19.